Consider the following 860-residue polypeptide: Leucine--tRNA ligase (860 aa).

A 'HIGH' region motif is present at residues Pro42–His52. The 'KMSKS' region signature appears at Lys619–Ser623. An ATP-binding site is contributed by Lys622.

It belongs to the class-I aminoacyl-tRNA synthetase family.

The protein localises to the cytoplasm. The enzyme catalyses tRNA(Leu) + L-leucine + ATP = L-leucyl-tRNA(Leu) + AMP + diphosphate. This is Leucine--tRNA ligase from Yersinia pestis bv. Antiqua (strain Angola).